Reading from the N-terminus, the 269-residue chain is Leucinostatins biosynthesis cluster protein T (269 aa).

The N-terminal stretch at 1 to 15 is a signal peptide; that stretch reads MHIILTGTGLVGAIA. Asn254 is a glycosylation site (N-linked (GlcNAc...) asparagine).

Part of the gene cluster that mediates the biosynthesis of the lipopeptide antibiotics leucinostatins that show extensive biological activities, including antimalarial, antiviral, antibacterial, antifungal, and antitumor activities, as well as phytotoxic. The function of lcsT within the leucinostatins biosynthesis has not been identified yet. The sequence is that of Leucinostatins biosynthesis cluster protein T from Purpureocillium lilacinum (Paecilomyces lilacinus).